Consider the following 211-residue polypeptide: SAGA-associated factor 11 homolog 2 (211 aa).

Residues 115–136 (CTCPNCDRLVAAARFAPHLEKC) form an SGF11-type zinc finger. Residues 149-211 (RRLATKEGSS…GSKKNNGKTF (63 aa)) form a disordered region. A compositionally biased stretch (low complexity) spans 157 to 166 (SSASTSSTST). Ser187 carries the phosphoserine modification. The span at 197 to 211 (SSRNNGSKKNNGKTF) shows a compositional bias: low complexity.

Belongs to the SGF11 family. In terms of assembly, component of some SAGA transcription coactivator-HAT complexes, at least composed of Ada2b, not/nonstop, Pcaf/Gcn5, Sgf11 and Spt3. Within the SAGA complex, Sgf11, e(y)2, and not/nonstop form an additional subcomplex of SAGA called the DUB module (deubiquitination module). Interacts directly with not/nonstop. Interacts with the AMEX complex component xmas-2. Interacts with Cbp80; important for promoter recruitment of Sgf11 that is not associated with the DUB module.

The protein localises to the nucleus. It is found in the nucleoplasm. It localises to the cytoplasm. In terms of biological role, component of the transcription regulatory histone acetylation (HAT) complex SAGA, a multiprotein complex that activates transcription by remodeling chromatin and mediating histone acetylation and deubiquitination. Within the SAGA complex, participates in a subcomplex that specifically deubiquitinates histone H2B. The SAGA complex is recruited to specific gene promoters by activators, where it is required for transcription. Required for nuclear receptor-mediated transactivation. Binds independently on SAGA to promoters in an RNA-dependent manner. Binds to mRNA and is essential for total mRNA export from the nucleus. Required to counteract heterochromatin silencing. Controls the development of neuronal connectivity in visual system by being required for accurate axon targeting in the optic lobe. Required for expression of ecdysone-induced genes such as br/broad. In Drosophila grimshawi (Hawaiian fruit fly), this protein is SAGA-associated factor 11 homolog 2.